Here is a 100-residue protein sequence, read N- to C-terminus: UPF0213 protein YhbQ (100 aa).

Residues 2 to 77 enclose the GIY-YIG domain; that stretch reads TPWFLYLIRT…KQLTKRQKER (76 aa).

The protein belongs to the UPF0213 family.

The protein is UPF0213 protein YhbQ of Escherichia coli O157:H7.